The following is a 640-amino-acid chain: 1-deoxy-D-xylulose-5-phosphate synthase (640 aa).

Residues His-77 and 118–120 each bind thiamine diphosphate; that span reads AHA. Asp-149 contributes to the Mg(2+) binding site. Thiamine diphosphate contacts are provided by residues 150–151, Asn-178, Tyr-287, and Glu-369; that span reads GS. Asn-178 serves as a coordination point for Mg(2+).

Belongs to the transketolase family. DXPS subfamily. As to quaternary structure, homodimer. Mg(2+) serves as cofactor. The cofactor is thiamine diphosphate.

The enzyme catalyses D-glyceraldehyde 3-phosphate + pyruvate + H(+) = 1-deoxy-D-xylulose 5-phosphate + CO2. Its pathway is metabolic intermediate biosynthesis; 1-deoxy-D-xylulose 5-phosphate biosynthesis; 1-deoxy-D-xylulose 5-phosphate from D-glyceraldehyde 3-phosphate and pyruvate: step 1/1. Catalyzes the acyloin condensation reaction between C atoms 2 and 3 of pyruvate and glyceraldehyde 3-phosphate to yield 1-deoxy-D-xylulose-5-phosphate (DXP). The polypeptide is 1-deoxy-D-xylulose-5-phosphate synthase (Caulobacter vibrioides (strain NA1000 / CB15N) (Caulobacter crescentus)).